The primary structure comprises 199 residues: MQYPEPIAKLIDSYMKLPGIGGKTATRLAFYTIDMNGDDVTEFAKSLIAAKRDLHFCSICGNITEDDPCVICKDKSRDQSTVLVVEEAKDVMAMEKIKEYNGLYHVLHGVLSPIDGKGPEDINIASLLKRLQQNEAIKEVIIATNATPEGEATAMYISRLVKPAGIKVTRLAHGLSVGSDIQYADEMTLFKAVEGRQEM.

A C4-type zinc finger spans residues 57 to 72; it reads CSICGNITEDDPCVIC. Residues 80–176 form the Toprim domain; that stretch reads STVLVVEEAK…KVTRLAHGLS (97 aa).

Belongs to the RecR family.

May play a role in DNA repair. It seems to be involved in an RecBC-independent recombinational process of DNA repair. It may act with RecF and RecO. This is Recombination protein RecR from Lactiplantibacillus plantarum (strain ATCC BAA-793 / NCIMB 8826 / WCFS1) (Lactobacillus plantarum).